A 376-amino-acid chain; its full sequence is Na(+)/H(+) antiporter NhaA (376 aa).

Transmembrane regions (helical) follow at residues 8-28 (FLATEAAGGIILIAAAAAAML), 49-69 (LSLLHWINDALMALFFLLVGL), 87-107 (ILPCIAAAAGMAAPALLYLAF), 117-137 (GWAIPTATDIAFAIGVLALLG), 140-160 (APASLKLFLTTIAIVDDMGAV), 162-182 (IIALAYTAAISGPALLAAIVI), 209-229 (LAVLLSGVHATIAGVLAALAI), 248-268 (PWVAFAIVPLFGFANAGVSFA), 270-290 (IGAEQLLAPLPLGIAAGLFLG), 321-341 (GVALLCGIGFTMSLFIGGLAF), and 349-369 (EVKIGVLGGSILSAIAGYALL).

It belongs to the NhaA Na(+)/H(+) (TC 2.A.33) antiporter family.

The protein resides in the cell inner membrane. It catalyses the reaction Na(+)(in) + 2 H(+)(out) = Na(+)(out) + 2 H(+)(in). In terms of biological role, na(+)/H(+) antiporter that extrudes sodium in exchange for external protons. This chain is Na(+)/H(+) antiporter NhaA, found in Rhizorhabdus wittichii (strain DSM 6014 / CCUG 31198 / JCM 15750 / NBRC 105917 / EY 4224 / RW1) (Sphingomonas wittichii).